The primary structure comprises 315 residues: MNGSRIAAVGHYQPAKVLTNEDLASLVDTSDEWIRSRVGIRTRHFAGPDEPVDELAGHAAAKALASAGLAPADIDLVLVATSTAEDRSPNMAARVAARLGIPSPAAMDINVVCAGFTHALATADHAVRAGAATRALVIGADKMSAVTDWSDRTTCVLVGDGAGAAVVDACPEGAEPGIGPVLWGSVPEMGHAVRIEGTPPRFAQEGQSVYRWATTQLPAIARRACERAGLTPADLAGVVLHQANLRIIEPLAAKIGAVNAVVARDVVESGNTSAASIPLAFSKLVERGEISTGDPVLLFGFGGNLSYAGQVIRCP.

Catalysis depends on residues cysteine 113 and histidine 241. Positions 242–246 (QANLR) are ACP-binding. Asparagine 271 is a catalytic residue.

The protein belongs to the thiolase-like superfamily. FabH family. In terms of assembly, homodimer.

Its subcellular location is the cytoplasm. The catalysed reaction is malonyl-[ACP] + acetyl-CoA + H(+) = 3-oxobutanoyl-[ACP] + CO2 + CoA. Its pathway is lipid metabolism; fatty acid biosynthesis. In terms of biological role, catalyzes the condensation reaction of fatty acid synthesis by the addition to an acyl acceptor of two carbons from malonyl-ACP. Catalyzes the first condensation reaction which initiates fatty acid synthesis and may therefore play a role in governing the total rate of fatty acid production. Possesses both acetoacetyl-ACP synthase and acetyl transacylase activities. Its substrate specificity determines the biosynthesis of branched-chain and/or straight-chain of fatty acids. This is Beta-ketoacyl-[acyl-carrier-protein] synthase III 2 from Streptomyces avermitilis (strain ATCC 31267 / DSM 46492 / JCM 5070 / NBRC 14893 / NCIMB 12804 / NRRL 8165 / MA-4680).